Consider the following 100-residue polypeptide: Small ribosomal subunit protein uS14c (100 aa).

This sequence belongs to the universal ribosomal protein uS14 family. As to quaternary structure, part of the 30S ribosomal subunit.

It is found in the plastid. The protein localises to the chloroplast. Functionally, binds 16S rRNA, required for the assembly of 30S particles. The chain is Small ribosomal subunit protein uS14c from Carica papaya (Papaya).